The following is a 394-amino-acid chain: Flap endonuclease 1-A (394 aa).

The segment at 1–105 (MGIKGLTKLI…RELAKRFARR (105 aa)) is N-domain. Asp34 lines the Mg(2+) pocket. Arg71 contributes to the DNA binding site. Mg(2+) contacts are provided by Asp87, Glu159, Glu161, Asp180, and Asp182. The tract at residues 123–254 (DVEKYSKKTV…QTALKMIRQH (132 aa)) is I-domain. Glu159 is a binding site for DNA. Residues Gly232 and Asp234 each coordinate DNA. Asp234 contacts Mg(2+). Residues 338–346 (SQGRLESFF) form an interaction with PCNA region. The interval 343 to 394 (ESFFGVSSSSSNKRKEAPDSEASAGKQVKTAAAVKPAKAASKKGPAKGGKKK) is disordered. A compositionally biased stretch (low complexity) spans 368 to 381 (KQVKTAAAVKPAKA). A compositionally biased stretch (basic residues) spans 382-394 (ASKKGPAKGGKKK).

Belongs to the XPG/RAD2 endonuclease family. FEN1 subfamily. As to quaternary structure, interacts with PCNA. Three molecules of FEN1 bind to one PCNA trimer with each molecule binding to one PCNA monomer. PCNA stimulates the nuclease activity without altering cleavage specificity. Mg(2+) serves as cofactor. In terms of processing, phosphorylated. Phosphorylation upon DNA damage induces relocalization to the nuclear plasma.

Its subcellular location is the nucleus. The protein resides in the nucleolus. It is found in the nucleoplasm. It localises to the mitochondrion. Structure-specific nuclease with 5'-flap endonuclease and 5'-3' exonuclease activities involved in DNA replication and repair. During DNA replication, cleaves the 5'-overhanging flap structure that is generated by displacement synthesis when DNA polymerase encounters the 5'-end of a downstream Okazaki fragment. It enters the flap from the 5'-end and then tracks to cleave the flap base, leaving a nick for ligation. Also involved in the long patch base excision repair (LP-BER) pathway, by cleaving within the apurinic/apyrimidinic (AP) site-terminated flap. Acts as a genome stabilization factor that prevents flaps from equilibrating into structures that lead to duplications and deletions. Also possesses 5'-3' exonuclease activity on nicked or gapped double-stranded DNA, and exhibits RNase H activity. Also involved in replication and repair of rDNA and in repairing mitochondrial DNA. The protein is Flap endonuclease 1-A of Physcomitrium patens (Spreading-leaved earth moss).